We begin with the raw amino-acid sequence, 499 residues long: Cytochrome P450 77A1 (499 aa).

Cys-443 lines the heme pocket.

It belongs to the cytochrome P450 family. Requires heme as cofactor.

This chain is Cytochrome P450 77A1 (CYP77A1), found in Solanum melongena (Eggplant).